Here is a 996-residue protein sequence, read N- to C-terminus: Disease resistance protein RGA4 (996 aa).

Positions 1–176 are structured coiled coil (CC) domain; sequence MEAALLSGFI…PRIHEADLVG (176 aa). Residues 111 to 138 are a coiled coil; that stretch reads NLQLAQQLQRLKRMAAEANQRKQRYTAA. One can recognise an NB-ARC domain in the interval 180 to 462; it reads DREELLEQLA…RWLAEGFVEP (283 aa). LRR repeat units lie at residues 481–503, 504–528, 529–549, 577–599, 600–621, 622–644, 698–722, 759–781, 782–804, 805–830, and 851–874; these read RNIIEPINVSNNDKVKTCQTYGM, MREFISHMSISQNFVTFFCDDKFVP, KYVRRLSLHGDTVVNGDNFNG, LRVLDLEKCDDLKDDHLKEICNL, VLLKYLSLGGNISKLPKDIAKL, KDLEALDVRRSKVKIMPVEVFGL, MNKLRKLKIWCTSSAGSTDWTDLRE, PCYLSSLKLHGNFPQLPQFVTSL, RGLKELCLSSTKFTTGLLEALSN, LSYLQYLKLVADELEKFIIKVQGFPR, and LPFLVTLQLLCKDLHGLSDIQIEC.

It belongs to the disease resistance NB-LRR family. In terms of assembly, forms homodimer or heterodimer with RGA5 through its coiled coil (CC) domain. In terms of tissue distribution, expressed in leaves.

It localises to the cytoplasm. In terms of biological role, disease resistance (R) protein. Resistance proteins guard the plant against pathogens that contain an appropriate avirulence protein via an indirect interaction with this avirulence protein. That triggers a defense system including the hypersensitive response, which restricts the pathogen growth. Contribution of RGA5 is required to recognize the effector avirulence proteins AVR-Pia and AVR1-CO39 from M.oryzae. Acts as a constitutively active cell death inducer that is repressed by RGA5. Immune response triggered by the RGA4-RGA5 -mediated recognition of AVR1-CO39 confers resistance to X.oryzae pathovars. This Oryza sativa subsp. japonica (Rice) protein is Disease resistance protein RGA4.